The sequence spans 477 residues: Alanine--glyoxylate aminotransferase 2 homolog 2, mitochondrial (477 aa).

A mitochondrion-targeting transit peptide spans 1 to 22; that stretch reads MQRFAAKRSVQNISVSLWRRCI. Pyridoxal 5'-phosphate is bound by residues 165 to 166, Tyr-192, and 292 to 295; these read GT and DEVQ. Position 321 is an N6-(pyridoxal phosphate)lysine (Lys-321). A pyridoxal 5'-phosphate-binding site is contributed by Thr-350.

It belongs to the class-III pyridoxal-phosphate-dependent aminotransferase family. As to quaternary structure, homotetramer. Interacts with GRF3. The cofactor is pyridoxal 5'-phosphate.

It is found in the mitochondrion. It carries out the reaction glyoxylate + L-alanine = glycine + pyruvate. The protein is Alanine--glyoxylate aminotransferase 2 homolog 2, mitochondrial (AGT3) of Arabidopsis thaliana (Mouse-ear cress).